The following is a 351-amino-acid chain: Centromere-binding protein 1 (351 aa).

The residue at position 1 (methionine 1) is an N-acetylmethionine. Composition is skewed to polar residues over residues 1–10 (MNSLANNNKL), 43–52 (LLSQESNDGN), and 65–77 (KGTQSQYESGLTS). Disordered regions lie at residues 1–164 (MNSL…TQQS), 196–233 (KKDISMQPGRRGRKPTTLATTDEWKKQRKDSHKEVERR), and 327–351 (YEDMHTHKKQENERKSTRSDNPHEA). Serine 45 bears the Phosphoserine; by ATM or ATR mark. The residue at position 48 (serine 48) is a Phosphoserine. A Phosphoserine modification is found at serine 84. Composition is skewed to polar residues over residues 100–124 (VNYTDLIQGQEDSSDAHTSNQTNAN) and 138–164 (TPSNEGVKPNTSLEGMTSSPMESTQQS). Phosphothreonine is present on threonine 138. The 49-residue stretch at 222–270 (QRKDSHKEVERRRRENINTAINVLSDLLPVRESSKAAILACAAEYIQKL) folds into the bHLH domain.

Binds DNA as a dimer. Associates with MET4 to form a heteromeric complex which also includes MET28.

The protein localises to the nucleus. It is found in the mitochondrion. It localises to the chromosome. Its subcellular location is the centromere. Functionally, required for chromosome stability and methionine prototrophy. It is involved in chromosomal segregation. Binds to a highly conserved DNA sequence (5'-RTCACRTG-3'), called CDEI, found in centromeres and in several promoters. DNA-binding activity is enhanced by MET28. Required as an auxiliary factor for transcriptional activation of sulfur metabolism together with MET4 and MET28. This chain is Centromere-binding protein 1 (CBF1), found in Saccharomyces cerevisiae (strain ATCC 204508 / S288c) (Baker's yeast).